We begin with the raw amino-acid sequence, 455 residues long: MFS-type transporter SLC18B1 (455 aa).

M1 is modified (N-acetylmethionine). A disordered region spans residues 1–26; sequence MDTAGPPAPAGTEGDGPGGSTGETSR. At 1-32 the chain is on the cytoplasmic side; sequence MDTAGPPAPAGTEGDGPGGSTGETSRRLSKEQ. S20 is modified (phosphoserine). Residues 33-53 traverse the membrane as a helical segment; that stretch reads IFVLVSAASMNLGCMMTYSIL. The Extracellular portion of the chain corresponds to 54-69; it reads GPFFPKEAEKKGASNT. The chain crosses the membrane as a helical span at residues 70–90; it reads TIGMIFGCYALFELLASLVFG. The Cytoplasmic portion of the chain corresponds to 91 to 99; it reads KYLVHIGAK. The chain crosses the membrane as a helical span at residues 100 to 120; the sequence is FMFIAGMFVSGGVTILFGVLD. The Extracellular portion of the chain corresponds to 121–126; sequence QLPEGP. A helical membrane pass occupies residues 127 to 147; it reads IFIAMCFLVRIVDAIGFGAAI. At 148 to 166 the chain is on the cytoplasmic side; the sequence is TASSSILAKAFPNNVATVM. The helical transmembrane segment at 167–187 threads the bilayer; that stretch reads GSLEVFSGLGLVAGPPLGGLL. At 188-194 the chain is on the extracellular side; the sequence is YQSFGYE. Residues 195-215 form a helical membrane-spanning segment; that stretch reads VPFIFLGCIVLLMIPLNLCIL. Topologically, residues 216-232 are cytoplasmic; sequence PSYESDAGKQSFWKLVT. Residues 233-253 form a helical membrane-spanning segment; the sequence is LPKIGLIAFVIISLSSCFGFL. At 254–271 the chain is on the extracellular side; that stretch reads DPTLSLFVMKKFSLSTGY. The helical transmembrane segment at 272–292 threads the bilayer; it reads VGLVFLGLSLSYAISSPLFGL. The Cytoplasmic portion of the chain corresponds to 293 to 303; the sequence is LSDKMPNLRKW. A helical membrane pass occupies residues 304–324; that stretch reads FLVFGNLITAGCYMLLGPIPL. Residues 325 to 330 are Extracellular-facing; sequence LHIKSQ. A helical transmembrane segment spans residues 331–351; it reads LWLLVLVLVINGVSAGMSIIP. Topologically, residues 352–376 are cytoplasmic; that stretch reads TFPEMLSCAYANGFEDGISTLGLVS. Residues 377 to 397 form a helical membrane-spanning segment; sequence GLFGAMWSVGAFMGPILGGFL. Over 398–406 the chain is Extracellular; sequence CEKIGFEWA. Residues 407-427 form a helical membrane-spanning segment; sequence AAIQGLWTLLSGVAMALFYLW. The Cytoplasmic portion of the chain corresponds to 428–455; it reads EDSTMRRSKAQNILGTEEEQAALLPNDT.

In terms of tissue distribution, expressed in brain structures, particularly in hippocampus, cortex, and cerebellum (at protein level). Expressed in astrocytes and hippocampal neurons (at protein level). Expressed in peritoneal mast cells.

The protein localises to the cytoplasmic vesicle. It is found in the secretory vesicle membrane. The protein resides in the secretory vesicle. It localises to the synaptic vesicle membrane. It catalyses the reaction spermine(in) + n H(+)(out) = spermine(out) + n H(+)(in). The enzyme catalyses spermidine(in) + n H(+)(out) = spermidine(out) + n H(+)(in). It carries out the reaction serotonin(in) + n H(+)(out) = serotonin(out) + n H(+)(in). Proton-coupled polyamine antiporter involved in the translocation of polyamines from cytosol into secretory vesicles prior to their release via exocytosis. Uses the electrochemical proton gradient generated by a V-type proton-pumping ATPase to couple the efflux of protons with the uptake of a polyamine molecule. Facilitates vesicular storage of spermine and spermidine in astrocytes with an impact on glutamatergic neuronal transmission and memory formation. Upon antigen stimulation, regulates polyamine accumulation and release in mast cell secretory granules, which in turn potentiates mast cell degranulation and histamine secretion. The chain is MFS-type transporter SLC18B1 from Rattus norvegicus (Rat).